The following is a 197-amino-acid chain: Tyrosine-protein phosphatase-like protein OCA2 (197 aa).

The region spanning 10–160 (SPVVSTDVSL…FETNLKIPRN (151 aa)) is the Tyrosine-protein phosphatase domain. S181 bears the Phosphoserine mark.

The protein belongs to the protein-tyrosine phosphatase family.

It localises to the cytoplasm. Its function is as follows. Required for normal growth in the presence of linoleic acid hydroperoxide (LoaOOH). The polypeptide is Tyrosine-protein phosphatase-like protein OCA2 (OCA2) (Saccharomyces cerevisiae (strain ATCC 204508 / S288c) (Baker's yeast)).